Here is a 395-residue protein sequence, read N- to C-terminus: uncharacterized protein (395 aa).

A compositionally biased stretch (low complexity) spans 286-306 (SSNKSSESTMTSPLDSASSLH). The tract at residues 286–395 (SSNKSSESTM…RNDDSGLESV (110 aa)) is disordered. The span at 350 to 362 (RPPPPSVHPPIFP) shows a compositional bias: pro residues. Residues 364-385 (QTQLFHPPTYSTQRHVTSPNSS) are compositionally biased toward polar residues.

This is an uncharacterized protein from Caenorhabditis elegans.